We begin with the raw amino-acid sequence, 253 residues long: 3-deoxy-manno-octulosonate cytidylyltransferase (253 aa).

This sequence belongs to the KdsB family.

The protein localises to the cytoplasm. The catalysed reaction is 3-deoxy-alpha-D-manno-oct-2-ulosonate + CTP = CMP-3-deoxy-beta-D-manno-octulosonate + diphosphate. The protein operates within nucleotide-sugar biosynthesis; CMP-3-deoxy-D-manno-octulosonate biosynthesis; CMP-3-deoxy-D-manno-octulosonate from 3-deoxy-D-manno-octulosonate and CTP: step 1/1. Its pathway is bacterial outer membrane biogenesis; lipopolysaccharide biosynthesis. Activates KDO (a required 8-carbon sugar) for incorporation into bacterial lipopolysaccharide in Gram-negative bacteria. The chain is 3-deoxy-manno-octulosonate cytidylyltransferase from Neisseria gonorrhoeae (strain ATCC 700825 / FA 1090).